Reading from the N-terminus, the 481-residue chain is Rhamnogalacturonan I rhamnosyltransferase 4 (481 aa).

A helical; Signal-anchor for type II membrane protein transmembrane segment spans residues 33 to 55; that stretch reads VWFFRVCSCILVWTCLIQLFWHS. Asn85 and Asn118 each carry an N-linked (GlcNAc...) asparagine glycan. 258-260 contributes to the substrate binding site; it reads HLR. 2 N-linked (GlcNAc...) asparagine glycosylation sites follow: Asn372 and Asn432.

Belongs to the glycosyltransferase GT106 family.

It is found in the golgi apparatus membrane. It catalyses the reaction alpha-D-galacturonosyl-[(1-&gt;2)-alpha-L-rhamnosyl-(1-&gt;4)-alpha-D-galacturonosyl](n) + UDP-beta-L-rhamnose = [(1-&gt;2)-alpha-L-rhamnosyl-(1-&gt;4)-alpha-D-galacturonosyl](n+1) + UDP + H(+). Its pathway is glycan metabolism; pectin biosynthesis. Functionally, glycosyltransferase involved in the formation of rhamnogalacturonan I (RG-I) oligosaccharides in the seed coat mucilage, which is a specialized cell wall with abundant RG-I. Transfers the rhamnose residue from UDP-beta-L-rhamnose to RG-I oligosaccharides. In Arabidopsis thaliana (Mouse-ear cress), this protein is Rhamnogalacturonan I rhamnosyltransferase 4.